A 414-amino-acid chain; its full sequence is Na(+)-translocating NADH-quinone reductase subunit B (414 aa).

The next 4 membrane-spanning stretches (helical) occupy residues 23–40, 56–76, 129–149, and 164–184; these read WFALYEAVATVFYTPGLV, IMIMVWFAVFPAMFWGMYNAG, FLPIYATVFLVGGFWEVLFCM, and ILFALIVPPTLPLWQAALGIT. Position 236 is an FMN phosphoryl threonine (Thr-236). 5 helical membrane-spanning segments follow: residues 268–288, 297–317, 325–345, 358–378, and 381–401; these read IPGSIGEVSTLALMIGAAMIV, IIAGVMIGMIAVSTLFNVVGS, MPWHWHLVLGGFAFGMFFMAT, WWYGILIGAMCVMIRVVNPAY, and GMMLAILFANLFAPLFDHVVI.

The protein belongs to the NqrB/RnfD family. In terms of assembly, composed of six subunits; NqrA, NqrB, NqrC, NqrD, NqrE and NqrF. FMN is required as a cofactor.

It is found in the cell inner membrane. The enzyme catalyses a ubiquinone + n Na(+)(in) + NADH + H(+) = a ubiquinol + n Na(+)(out) + NAD(+). NQR complex catalyzes the reduction of ubiquinone-1 to ubiquinol by two successive reactions, coupled with the transport of Na(+) ions from the cytoplasm to the periplasm. NqrA to NqrE are probably involved in the second step, the conversion of ubisemiquinone to ubiquinol. This Vibrio parahaemolyticus serotype O3:K6 (strain RIMD 2210633) protein is Na(+)-translocating NADH-quinone reductase subunit B.